Here is a 444-residue protein sequence, read N- to C-terminus: uncharacterized protein (444 aa).

At K268 the chain carries N6-(pyridoxal phosphate)lysine.

It belongs to the class-III pyridoxal-phosphate-dependent aminotransferase family. Pyridoxal 5'-phosphate serves as cofactor.

This is an uncharacterized protein from Bacillus subtilis (strain 168).